The sequence spans 152 residues: 1,4-dihydroxy-2-naphthoyl-CoA hydrolase (152 aa).

The active site involves D20.

Belongs to the 4-hydroxybenzoyl-CoA thioesterase family. DHNA-CoA hydrolase subfamily.

The enzyme catalyses 1,4-dihydroxy-2-naphthoyl-CoA + H2O = 1,4-dihydroxy-2-naphthoate + CoA + H(+). The protein operates within cofactor biosynthesis; phylloquinone biosynthesis. It functions in the pathway quinol/quinone metabolism; 1,4-dihydroxy-2-naphthoate biosynthesis; 1,4-dihydroxy-2-naphthoate from chorismate: step 7/7. Catalyzes the hydrolysis of 1,4-dihydroxy-2-naphthoyl-CoA (DHNA-CoA) to 1,4-dihydroxy-2-naphthoate (DHNA), a reaction involved in phylloquinone (vitamin K1) biosynthesis. The chain is 1,4-dihydroxy-2-naphthoyl-CoA hydrolase from Parasynechococcus marenigrum (strain WH8102).